We begin with the raw amino-acid sequence, 296 residues long: Acetylglutamate kinase (296 aa).

Residues 69 to 70 (GG), Arg-91, and Asn-193 contribute to the substrate site.

This sequence belongs to the acetylglutamate kinase family. ArgB subfamily.

The protein resides in the cytoplasm. The enzyme catalyses N-acetyl-L-glutamate + ATP = N-acetyl-L-glutamyl 5-phosphate + ADP. The protein operates within amino-acid biosynthesis; L-arginine biosynthesis; N(2)-acetyl-L-ornithine from L-glutamate: step 2/4. Catalyzes the ATP-dependent phosphorylation of N-acetyl-L-glutamate. The chain is Acetylglutamate kinase from Albidiferax ferrireducens (strain ATCC BAA-621 / DSM 15236 / T118) (Rhodoferax ferrireducens).